Here is a 389-residue protein sequence, read N- to C-terminus: Phosphatidylglycerol--prolipoprotein diacylglyceryl transferase (389 aa).

Helical transmembrane passes span 28–48 (IIVA…LIYF), 58–78 (FFIF…YFLI), 98–118 (LAIQ…FNVF), and 148–168 (ISVF…QAIG). A 1,2-diacyl-sn-glycero-3-phospho-(1'-sn-glycerol) is bound at residue Arg169. Transmembrane regions (helical) follow at residues 220–240 (IPLF…IYFV), 281–301 (IVFS…CQTL), and 309–329 (FWTY…TTLF).

It belongs to the Lgt family.

It is found in the cell membrane. The catalysed reaction is L-cysteinyl-[prolipoprotein] + a 1,2-diacyl-sn-glycero-3-phospho-(1'-sn-glycerol) = an S-1,2-diacyl-sn-glyceryl-L-cysteinyl-[prolipoprotein] + sn-glycerol 1-phosphate + H(+). It functions in the pathway protein modification; lipoprotein biosynthesis (diacylglyceryl transfer). Functionally, catalyzes the transfer of the diacylglyceryl group from phosphatidylglycerol to the sulfhydryl group of the N-terminal cysteine of a prolipoprotein, the first step in the formation of mature lipoproteins. This Mycoplasma pneumoniae (strain ATCC 29342 / M129 / Subtype 1) (Mycoplasmoides pneumoniae) protein is Phosphatidylglycerol--prolipoprotein diacylglyceryl transferase.